The sequence spans 349 residues: ATP phosphoribosyltransferase regulatory subunit (349 aa).

Residues 327–349 (GRGRGVRPRRASARGGRARARPR) form a disordered region. A compositionally biased stretch (basic residues) spans 330–349 (RGVRPRRASARGGRARARPR).

This sequence belongs to the class-II aminoacyl-tRNA synthetase family. HisZ subfamily. Heteromultimer composed of HisG and HisZ subunits.

The protein localises to the cytoplasm. It functions in the pathway amino-acid biosynthesis; L-histidine biosynthesis; L-histidine from 5-phospho-alpha-D-ribose 1-diphosphate: step 1/9. In terms of biological role, required for the first step of histidine biosynthesis. May allow the feedback regulation of ATP phosphoribosyltransferase activity by histidine. This chain is ATP phosphoribosyltransferase regulatory subunit, found in Anaeromyxobacter dehalogenans (strain 2CP-1 / ATCC BAA-258).